Reading from the N-terminus, the 543-residue chain is MAKDIKFSADARAAMVRGVDMLADTVKVTLGPKGRNVVLEKAFGSPLITNDGVTIAKEIELEDHFENMGAKLVSEVASKTNDIAGDGTTTATVLTQAIVHEGLKNVTAGANPIGIRRGIETATATAVEALKAIAQPVSGKEAIAQVAAVSSRSEKVGEYISEAMERVGNDGVITIEESRGMETELEVVEGMQFDRGYLSQYMVTDNEKMVADLENPFILITDKKVSNIQDILPLLEEVLKTNRPLLIIADDVDGEALPTLVLNKIRGTFNVVAVKAPGFGDRRKAMLEDIAILTGGTVITEDLGLELKDATMTALGQAAKITVDKDSTVIVEGSGSSEAIANRIALIKSQLETTTSDFDREKLQERLAKLGGGVAVIKVGAPTETALKEMKLRIEDALNATRAAVEEGIVAGGGTALITVIEKVAALELEGDDATGRNIVLRALEEPVRQIALNAGYEGSVVIDKLKNSPAGTGFNAATGEWVDMIKTGIIDPVKVTRSALQNAASVASLILTTEAVVANKPEPAAPAPAMPAGMDPGMMGGF.

Residues 29 to 32 (TLGP), 86 to 90 (DGTTT), G413, 476 to 478 (NAA), and D492 contribute to the ATP site.

It belongs to the chaperonin (HSP60) family. Forms a cylinder of 14 subunits composed of two heptameric rings stacked back-to-back. Interacts with the co-chaperonin GroES.

The protein resides in the cytoplasm. It carries out the reaction ATP + H2O + a folded polypeptide = ADP + phosphate + an unfolded polypeptide.. Together with its co-chaperonin GroES, plays an essential role in assisting protein folding. The GroEL-GroES system forms a nano-cage that allows encapsulation of the non-native substrate proteins and provides a physical environment optimized to promote and accelerate protein folding. The protein is Chaperonin GroEL of Streptococcus pyogenes serotype M3 (strain SSI-1).